A 364-amino-acid chain; its full sequence is MSLPRIAVDAMGGDEGVRVMVEGAALARRRHDRFKFLLVGDEARIKQALENHPNLRGASEILHAPDIVSGDEKPTQALRRAKTTSMGMAINAVKRGEAGAAVSAGNTGALMAMAKLALRTLPGIDRPALSALLPTLGDNDLVMLDLGANTECDARNLVQFAIMGAAYARIVNGLDAPRVRLLNIGTEETKGTDSLRDAATELKALAGDLALSFDGFTEADKLSRGDVDVVVTDGFSGNIALKSMEGAARFVADLLRRSFSSSLRSKLGFLISRPATELLKHHLDPNNHNGAVFLGLNGIVVKSHGGASALGVANAVAVTARLLEENLTERIKADLARVGAEAIRTSGRSGGKSKSSAAREDGAA.

Positions 343-364 are disordered; it reads IRTSGRSGGKSKSSAAREDGAA.

Belongs to the PlsX family. In terms of assembly, homodimer. Probably interacts with PlsY.

The protein localises to the cytoplasm. The enzyme catalyses a fatty acyl-[ACP] + phosphate = an acyl phosphate + holo-[ACP]. Its pathway is lipid metabolism; phospholipid metabolism. Catalyzes the reversible formation of acyl-phosphate (acyl-PO(4)) from acyl-[acyl-carrier-protein] (acyl-ACP). This enzyme utilizes acyl-ACP as fatty acyl donor, but not acyl-CoA. The protein is Phosphate acyltransferase of Novosphingobium aromaticivorans (strain ATCC 700278 / DSM 12444 / CCUG 56034 / CIP 105152 / NBRC 16084 / F199).